We begin with the raw amino-acid sequence, 350 residues long: Probable poly-beta-1,6-N-acetyl-D-glucosamine export protein (350 aa).

Helical transmembrane passes span 8–28, 40–60, 83–103, 119–139, 146–166, 182–202, 216–236, 254–274, 276–296, and 308–328; these read LVYLRAIICAIIIITHLLTQI, LVLQFYIRNIVIFGTPCFIIL, YILIPYILMGLFYSYSESLLT, QWYGYFIVVIMQFFILSYIIF, FNSKILLLLSFILQQSFLYYF, LSENTIIFGWIFYFFLGAYMG, LVIMIVLAVATYFVFIALANG, IMFIVILGICTHFKTMLFNTI, MISAFSFFIYLLHPIILDSLF, and VFLAISLLFILGLCIGVGMIL.

It belongs to the acyltransferase 3 family.

Its subcellular location is the cell membrane. Functionally, presumably involved in the export of the biofilm adhesin polysaccharide poly-beta-1,6-N-acetyl-D-glucosamine (PNAG, also referred to as PIA) across the cell membrane. The chain is Probable poly-beta-1,6-N-acetyl-D-glucosamine export protein (icaC) from Staphylococcus aureus (strain NCTC 8325 / PS 47).